The sequence spans 401 residues: L-rhamnonate dehydratase (401 aa).

The substrate site is built by H29 and R55. D222, E248, and E276 together coordinate Mg(2+). H325 functions as the Proton acceptor in the catalytic mechanism. A substrate-binding site is contributed by E345.

The protein belongs to the mandelate racemase/muconate lactonizing enzyme family. RhamD subfamily. Homooctamer; tetramer of dimers. Mg(2+) is required as a cofactor.

It carries out the reaction L-rhamnonate = 2-dehydro-3-deoxy-L-rhamnonate + H2O. Catalyzes the dehydration of L-rhamnonate to 2-keto-3-deoxy-L-rhamnonate (KDR). The sequence is that of L-rhamnonate dehydratase from Escherichia coli O157:H7.